Here is a 247-residue protein sequence, read N- to C-terminus: UPF0309 protein Lm4b_02611 (247 aa).

In terms of domain architecture, SIS spans 31–214; that stretch reads VAESIENDGV…ETMVNDNFTP (184 aa).

It belongs to the UPF0309 family.

In Listeria monocytogenes serotype 4b (strain CLIP80459), this protein is UPF0309 protein Lm4b_02611.